A 79-amino-acid chain; its full sequence is MSALKDIVELTAKELVDNKDKVRVTEIEGEKTVVIELRVDPAELGKVIGKQGRIARALRTILTAIGRKIGKRVVLEILE.

Positions T32–E79 constitute a KH domain.

It belongs to the KhpA RNA-binding protein family.

The protein resides in the cytoplasm. A probable RNA-binding protein. The chain is RNA-binding protein KhpA from Aquifex aeolicus (strain VF5).